Here is a 298-residue protein sequence, read N- to C-terminus: DDRGK domain-containing protein 1 (298 aa).

The Lumenal portion of the chain corresponds to 1 to 2 (ME). A helical transmembrane segment spans residues 3 to 23 (EIFALIVSMILIVAVIPLFFW). The Cytoplasmic segment spans residues 24–298 (KRRRDARSRE…ISGMEEISVS (275 aa)). The interval 31 to 155 (SREEVAEPPQ…EEEKARQAKE (125 aa)) is disordered. Residues 101-155 (KRQEREAQRQAEEATRESRNTKQDWYAEMRRKKDEEREAEELKLEEEEKARQAKE) show a composition bias toward basic and acidic residues.

It belongs to the DDRGK1 family.

The protein localises to the endoplasmic reticulum membrane. Its function is as follows. Substrate adapter for ufmylation, the covalent attachment of the ubiquitin-like modifier UFM1 to substrate proteins. The sequence is that of DDRGK domain-containing protein 1 from Arabidopsis thaliana (Mouse-ear cress).